A 491-amino-acid chain; its full sequence is MDFLTYLPSWLLPAVVILTISCILMLWTKPSKGASGLNLPPGPPSLPLIGNLHQLIGKSFHETVYKLAEKYGPIMHIHMGSQPVVVISSSALATEAFKTHDHILANRQYSNNLRRLTFDYNDIAWAPYGDHSKHMRRVLVTEFLNSRMSKSFKKVLDMEVKSMLDNLPYGTETNLNKVFGNFVCDFTSKVVTGKSYRDVKIRGKTMKEMLDEMIILFSGSFSEIFPKYGWILEDLSGWTRRVDKHMANYNDLLELMIDEHLDHTSEDEKDMIDACRPLLNREEMKAIMSNVYNGAIDTSYLTLVWAMSEIVKNPRVMHKLQDEIRSNAGNKARLDETDTSKMTYLKYVVKETLRRHGPSPFLIPRDCVSHIQIGGYDILPGTKVLINAWGIAKDPKVWTENANEFHPDRFENHVLEQFHMVPFGGGRRACPGYNFATLNIEVVLANLLYSIDWKLPPGLTLEDFNMEEEGSLLVTKKTPLYLVPIKHNTQA.

A helical; Signal-anchor for type II membrane protein transmembrane segment spans residues 7–27; the sequence is LPSWLLPAVVILTISCILMLW. A heme-binding site is contributed by Cys430.

This sequence belongs to the cytochrome P450 family. Requires heme as cofactor. As to expression, expressed in leaf primordia.

The protein localises to the membrane. It carries out the reaction 8beta-hydroxygermacra-1(10),4,11(13)-trien-12-oate + reduced [NADPH--hemoprotein reductase] + O2 = eupatolide + oxidized [NADPH--hemoprotein reductase] + 2 H2O. It participates in secondary metabolite biosynthesis; terpenoid biosynthesis. Functionally, involved in the biosynthesis of germacrene-derived sesquiterpene lactones. Hydroxylates 8-beta-hydroxy-germacrene A acid to 6-alpha,8-beta-hydroxy-germacrene A acid, which, in turn, undergo spontaneous lactonization to become eupatolide. This is Eupatolide synthase from Helianthus annuus (Common sunflower).